Reading from the N-terminus, the 219-residue chain is MSRMPFDRQKIVEAVKEAKARAKPRNFTQSVEVAVNLKDIDLKRPENRFKLEVVLPHGRGKDVKIAVIADGAVAEAARRLGLDVISSAELEEIAQSPRQARKLAKKYDFFIAEAPLMPKIGRYLGKYLGPRNKMPVVVPPTMSNLEPIVEKLKKTVRIQLKNNPVVHAPVGTEKMSDEEIAENIETVLNAIIGKLERGESQIKSVYVKTTMGPAVKVKG.

Belongs to the universal ribosomal protein uL1 family. Part of the 50S ribosomal subunit.

Its function is as follows. Binds directly to 23S rRNA. Probably involved in E site tRNA release. Functionally, protein L1 is also a translational repressor protein, it controls the translation of its operon by binding to its mRNA. The polypeptide is Large ribosomal subunit protein uL1 (Pyrococcus abyssi (strain GE5 / Orsay)).